Here is a 684-residue protein sequence, read N- to C-terminus: Acetophenone carboxylase delta subunit (684 aa).

Belongs to the oxoprolinase family. As to quaternary structure, acetophenone carboxylase consists of five subunits; a heterooctameric subcomplex of two alpha (Apc1), two beta (Apc2), two gamma (Apc3) and two delta (Apc4) subunits assembles with the epsilon (Apc5) subunit in an unknown stoichiometry. Mg(2+) is required as a cofactor. The cofactor is Mn(2+).

It localises to the cytoplasm. It carries out the reaction acetophenone + hydrogencarbonate + 2 ATP + H2O = 3-oxo-3-phenylpropanoate + 2 ADP + 2 phosphate + 2 H(+). Its activity is regulated as follows. Inhibited by zinc ions, carbamoylphosphate and beta,gamma-imido-ATP. Functionally, catalyzes the carboxylation of acetophenone to form 3-oxo-3-phenylpropanoate (benzoylacetate) in the anaerobic catabolism of ethylbenzene. Also carboxylates propiophenone at the same rate and 4-acetyl-pyridine at lower rates. The protein is Acetophenone carboxylase delta subunit (apc4) of Aromatoleum aromaticum (strain DSM 19018 / LMG 30748 / EbN1) (Azoarcus sp. (strain EbN1)).